Reading from the N-terminus, the 424-residue chain is Isovaleryl-CoA dehydrogenase, mitochondrial (424 aa).

A mitochondrion-targeting transit peptide spans M1–A30. N6-acetyllysine; alternate is present on residues K56, K65, and K76. Residues K56, K65, and K76 each carry the N6-succinyllysine; alternate modification. FAD is bound by residues L163–S172 and W196–T198. S172 provides a ligand contact to substrate. S220–R221 is a substrate binding site. The residue at position 239 (K239) is an N6-acetyllysine. N6-acetyllysine; alternate is present on K260. N6-succinyllysine; alternate is present on K260. Substrate contacts are provided by residues Y275 and D282–R285. E284 functions as the Proton acceptor in the catalytic mechanism. Residue R310 coordinates FAD. An N6-succinyllysine modification is found at K316. Residues Q321 and Q378–G382 contribute to the FAD site. G405–G406 serves as a coordination point for substrate. T407 to E409 serves as a coordination point for FAD.

The protein belongs to the acyl-CoA dehydrogenase family. In terms of assembly, homotetramer. It depends on FAD as a cofactor.

The protein localises to the mitochondrion matrix. The catalysed reaction is 3-methylbutanoyl-CoA + oxidized [electron-transfer flavoprotein] + H(+) = 3-methylbut-2-enoyl-CoA + reduced [electron-transfer flavoprotein]. It catalyses the reaction pentanoyl-CoA + oxidized [electron-transfer flavoprotein] + H(+) = (2E)-pentenoyl-CoA + reduced [electron-transfer flavoprotein]. The enzyme catalyses hexanoyl-CoA + oxidized [electron-transfer flavoprotein] + H(+) = (2E)-hexenoyl-CoA + reduced [electron-transfer flavoprotein]. It carries out the reaction butanoyl-CoA + oxidized [electron-transfer flavoprotein] + H(+) = (2E)-butenoyl-CoA + reduced [electron-transfer flavoprotein]. It functions in the pathway amino-acid degradation; L-leucine degradation; (S)-3-hydroxy-3-methylglutaryl-CoA from 3-isovaleryl-CoA: step 1/3. Functionally, catalyzes the conversion of isovaleryl-CoA/3-methylbutanoyl-CoA to 3-methylbut-2-enoyl-CoA as an intermediate step in the leucine (Leu) catabolic pathway. To a lesser extent, is also able to catalyze the oxidation of other saturated short-chain acyl-CoA thioesters as pentanoyl-CoA, hexenoyl-CoA and butenoyl-CoA. In Rattus norvegicus (Rat), this protein is Isovaleryl-CoA dehydrogenase, mitochondrial (Ivd).